Reading from the N-terminus, the 287-residue chain is Phosphoribosylaminoimidazole-succinocarboxamide synthase (287 aa).

It belongs to the SAICAR synthetase family.

It catalyses the reaction 5-amino-1-(5-phospho-D-ribosyl)imidazole-4-carboxylate + L-aspartate + ATP = (2S)-2-[5-amino-1-(5-phospho-beta-D-ribosyl)imidazole-4-carboxamido]succinate + ADP + phosphate + 2 H(+). It participates in purine metabolism; IMP biosynthesis via de novo pathway; 5-amino-1-(5-phospho-D-ribosyl)imidazole-4-carboxamide from 5-amino-1-(5-phospho-D-ribosyl)imidazole-4-carboxylate: step 1/2. The sequence is that of Phosphoribosylaminoimidazole-succinocarboxamide synthase from Neisseria meningitidis serogroup C (strain 053442).